The sequence spans 553 residues: Glycerol kinase 2 (553 aa).

Thr20 contributes to the substrate binding site. Arg24 contributes to the ATP binding site. Substrate is bound by residues Arg94, Tyr148, and Asp259. ATP contacts are provided by residues Thr281, Gly326, and 427-431; that span reads GMTNN. The chain crosses the membrane as a helical span at residues 526-546; it reads IFSSLPLGFFIVSSMVMLIGA.

Belongs to the FGGY kinase family. As to quaternary structure, interacts with ARMC12. Interacts with PLD6. As to expression, testis-specific. Expressed in the midpiece of spermatozoa.

Its subcellular location is the mitochondrion outer membrane. It is found in the cytoplasm. The catalysed reaction is glycerol + ATP = sn-glycerol 3-phosphate + ADP + H(+). It functions in the pathway polyol metabolism; glycerol degradation via glycerol kinase pathway; sn-glycerol 3-phosphate from glycerol: step 1/1. Its function is as follows. Key enzyme in the regulation of glycerol uptake and metabolism. Essential for male fertility and sperm mitochondrial sheath formation. Required for proper arrangement of crescent-like mitochondria to form the mitochondrial sheath during spermatogenesis. Can induce mitochondrial clustering through interactions with PLD6 and up-regulation of phosphatidic acid synthesis in the mitochondria. The protein is Glycerol kinase 2 (GK2) of Homo sapiens (Human).